The chain runs to 329 residues: Acrosin (329 aa).

Positions 1–17 (MLPTAVLLVLAVSVVAR) are cleaved as a signal peptide. The N-linked (GlcNAc...) asparagine glycan is linked to N19. Disulfide bonds link C22/C152, C26/C160, C71/C87, C175/C244, C207/C223, and C234/C264. The Peptidase S1 domain maps to 40–288 (IIGGQDAAHG…YLNWIASKIG (249 aa)). Catalysis depends on charge relay system residues H86 and D140. N208 is a glycosylation site (N-linked (GlcNAc...) asparagine). S238 acts as the Charge relay system in catalysis.

This sequence belongs to the peptidase S1 family. In terms of assembly, heavy chain (catalytic) and a light chain linked by two disulfide bonds. Forms a heterodimer with SERPINA5.

It carries out the reaction Preferential cleavage: Arg-|-Xaa, Lys-|-Xaa.. Its activity is regulated as follows. Inhibited by SERPINA5. Acrosin is the major protease of mammalian spermatozoa. It is a serine protease of trypsin-like cleavage specificity, it is synthesized in a zymogen form, proacrosin and stored in the acrosome. The chain is Acrosin (ACR) from Ovis aries (Sheep).